Reading from the N-terminus, the 445-residue chain is uncharacterized protein (445 aa).

The disordered stretch occupies residues 139 to 160; that stretch reads TESQKDLEYERKANKTKEENQQ.

This is an uncharacterized protein from Mycoplasma pneumoniae (strain ATCC 29342 / M129 / Subtype 1) (Mycoplasmoides pneumoniae).